Reading from the N-terminus, the 448-residue chain is Rhodanese-like domain-containing protein 8, chloroplastic (448 aa).

Residues 1–23 (MRVSPAATLSVSLTTPLPITLTK) constitute a chloroplast transit peptide. Residues 220-323 (SGKSYILLDV…YLKEEGTAEW (104 aa)) form the Rhodanese domain. Cys-283 (cysteine persulfide intermediate) is an active-site residue.

It is found in the plastid. The protein localises to the chloroplast. This is Rhodanese-like domain-containing protein 8, chloroplastic (STR8) from Arabidopsis thaliana (Mouse-ear cress).